Reading from the N-terminus, the 349-residue chain is Histidinol-phosphate aminotransferase 1 (349 aa).

Lys213 carries the post-translational modification N6-(pyridoxal phosphate)lysine.

The protein belongs to the class-II pyridoxal-phosphate-dependent aminotransferase family. Histidinol-phosphate aminotransferase subfamily. In terms of assembly, homodimer. Pyridoxal 5'-phosphate serves as cofactor.

The catalysed reaction is L-histidinol phosphate + 2-oxoglutarate = 3-(imidazol-4-yl)-2-oxopropyl phosphate + L-glutamate. It functions in the pathway amino-acid biosynthesis; L-histidine biosynthesis; L-histidine from 5-phospho-alpha-D-ribose 1-diphosphate: step 7/9. The sequence is that of Histidinol-phosphate aminotransferase 1 from Carboxydothermus hydrogenoformans (strain ATCC BAA-161 / DSM 6008 / Z-2901).